Reading from the N-terminus, the 402-residue chain is Olfactomedin-like protein 1 (402 aa).

The N-terminal stretch at 1–28 (MMVALRGASALLVLFLAAFLPPPQCTQD) is a signal peptide. Asn-66 carries N-linked (GlcNAc...) asparagine glycosylation. The stretch at 79-133 (SEYKSAVGNLALRVERAQREIDYIQYLREADECIESEDKTLAEMLLQEAEEEKKI) forms a coiled coil. Residues Asn-138 and Asn-183 are each glycosylated (N-linked (GlcNAc...) asparagine). One can recognise an Olfactomedin-like domain in the interval 140–397 (SCDNMLMGIK…QIIYKLQTKR (258 aa)). Cys-141 and Cys-324 are disulfide-bonded.

Highly N-glycosylated. As to expression, mainly expressed in the small intestine, liver, lung and heart.

Its subcellular location is the secreted. This is Olfactomedin-like protein 1 (OLFML1) from Homo sapiens (Human).